The primary structure comprises 208 residues: Ras-related protein Rab-6 (208 aa).

Residues 14 to 21 (DQSVGKTS), Thr-38, 62 to 66 (TAGQE), and 120 to 123 (KTDL) contribute to the GTP site. The S-geranylgeranyl cysteine moiety is linked to residue Cys-208.

The protein belongs to the small GTPase superfamily. Rab family.

Functionally, protein transport. Probably involved in vesicular traffic. This Dictyostelium discoideum (Social amoeba) protein is Ras-related protein Rab-6 (rab6).